The primary structure comprises 163 residues: Putative H/ACA ribonucleoprotein complex subunit 2-like protein (163 aa).

The segment at 1–27 (MGKRNLDETMNESTVSEANGDATAPTT) is disordered.

It belongs to the eukaryotic ribosomal protein eL8 family. In terms of assembly, component of the small nucleolar ribonucleoprotein particle containing H/ACA-type snoRNAs (H/ACA snoRNPs).

It localises to the nucleus. The protein resides in the nucleolus. Functionally, required for ribosome biogenesis. Part of a complex which catalyzes pseudouridylation of rRNA. This involves the isomerization of uridine such that the ribose is subsequently attached to C5, instead of the normal N1. Pseudouridine ('psi') residues may serve to stabilize the conformation of rRNAs. The chain is Putative H/ACA ribonucleoprotein complex subunit 2-like protein from Caenorhabditis elegans.